Reading from the N-terminus, the 321-residue chain is Sideroflexin-3 (321 aa).

Met1 is modified (N-acetylmethionine). The next 4 helical transmembrane spans lie at 146 to 164 (LGTA…ALGL), 174 to 194 (LVGR…NIPL), 225 to 245 (IFQV…IPPV), and 266 to 286 (LQVG…CALF).

It belongs to the sideroflexin family. In terms of tissue distribution, widely expressed.

The protein localises to the mitochondrion membrane. It catalyses the reaction L-serine(in) = L-serine(out). Mitochondrial serine transporter that mediates transport of serine into mitochondria, an important step of the one-carbon metabolism pathway. Mitochondrial serine is converted to glycine and formate, which then exits to the cytosol where it is used to generate the charged folates that serve as one-carbon donors. In Mus musculus (Mouse), this protein is Sideroflexin-3.